Reading from the N-terminus, the 62-residue chain is Photosystem II reaction center protein Z (62 aa).

2 helical membrane-spanning segments follow: residues 8–28 and 41–61; these read AVFA…VVFA and FSGT…NSLI.

It belongs to the PsbZ family. As to quaternary structure, PSII is composed of 1 copy each of membrane proteins PsbA, PsbB, PsbC, PsbD, PsbE, PsbF, PsbH, PsbI, PsbJ, PsbK, PsbL, PsbM, PsbT, PsbY, PsbZ, Psb30/Ycf12, at least 3 peripheral proteins of the oxygen-evolving complex and a large number of cofactors. It forms dimeric complexes.

The protein resides in the plastid. It is found in the chloroplast thylakoid membrane. Functionally, may control the interaction of photosystem II (PSII) cores with the light-harvesting antenna, regulates electron flow through the 2 photosystem reaction centers. PSII is a light-driven water plastoquinone oxidoreductase, using light energy to abstract electrons from H(2)O, generating a proton gradient subsequently used for ATP formation. The chain is Photosystem II reaction center protein Z from Pisum sativum (Garden pea).